Consider the following 382-residue polypeptide: Mannitol-1-phosphate 5-dehydrogenase (382 aa).

3-14 lines the NAD(+) pocket; sequence ALHFGAGNIGRG.

The protein belongs to the mannitol dehydrogenase family.

The catalysed reaction is D-mannitol 1-phosphate + NAD(+) = beta-D-fructose 6-phosphate + NADH + H(+). The sequence is that of Mannitol-1-phosphate 5-dehydrogenase from Cronobacter sakazakii (strain ATCC BAA-894) (Enterobacter sakazakii).